The primary structure comprises 278 residues: 4-hydroxy-tetrahydrodipicolinate reductase (278 aa).

NAD(+)-binding positions include 13 to 18 (GAAGKM) and 111 to 113 (GTT). His167 functions as the Proton donor/acceptor in the catalytic mechanism. His168 is a (S)-2,3,4,5-tetrahydrodipicolinate binding site. Residue Lys171 is the Proton donor of the active site. 177–178 (GT) serves as a coordination point for (S)-2,3,4,5-tetrahydrodipicolinate.

The protein belongs to the DapB family.

Its subcellular location is the cytoplasm. It carries out the reaction (S)-2,3,4,5-tetrahydrodipicolinate + NAD(+) + H2O = (2S,4S)-4-hydroxy-2,3,4,5-tetrahydrodipicolinate + NADH + H(+). It catalyses the reaction (S)-2,3,4,5-tetrahydrodipicolinate + NADP(+) + H2O = (2S,4S)-4-hydroxy-2,3,4,5-tetrahydrodipicolinate + NADPH + H(+). It participates in amino-acid biosynthesis; L-lysine biosynthesis via DAP pathway; (S)-tetrahydrodipicolinate from L-aspartate: step 4/4. Its function is as follows. Catalyzes the conversion of 4-hydroxy-tetrahydrodipicolinate (HTPA) to tetrahydrodipicolinate. The polypeptide is 4-hydroxy-tetrahydrodipicolinate reductase (Trichormus variabilis (strain ATCC 29413 / PCC 7937) (Anabaena variabilis)).